Here is a 383-residue protein sequence, read N- to C-terminus: Fatty acid hydroxylase ahd1 (383 aa).

The next 4 helical transmembrane spans lie at 84–104, 123–143, 172–192, and 214–236; these read VMGL…NKSW, TVHT…LFAL, LIPV…IIYY, and VAQW…RALH. Residues 217–341 form the Fatty acid hydroxylase domain; it reads WLVCLLMEDI…VGLLDAIFKT (125 aa). N-linked (GlcNAc...) asparagine glycosylation is present at Asn342.

The protein belongs to the sterol desaturase family.

It localises to the membrane. It functions in the pathway secondary metabolite biosynthesis. Fatty acid hydroxylase; part of the gene cluster that mediates the biosynthesis of the glycolipid biosurfactant ustilagic acid (UA). UA is a secreted cellobiose glycolipid that is toxic for many microorganisms and confers biocontrol activity to U.maydis. UA consists of 15,16-dihydroxypalmitic or 2,15,16-trihydroxypalmitic acid, which is O-glycosidically linked to cellobiose at its terminal hydroxyl group. In addition, the cellobiose moiety is acetylated and acylated with a short-chain hydroxy fatty acid. UA biosynthesis starts with omega-hydroxylation of palmitic acid catalyzed by the cytochrome P450 monooxygenase cyp1. Terminal hydroxylation of palmitic acid precedes subterminal hydroxylation catalyzed by the cytochrome P450 monooxygenase cyp2. Sequential glucosylation of the hydroxy fatty acid is probably catalyzed by the glycosyltransferase ugt1. The cellobiose lipid is further decorated by acetylation of the proximal glucose residue and by acylation with a short-chain beta-hydroxy fatty acid at the distal glucose residue. The acyltransferase uat1 may be a good candidate for catalyzing either acetylation or acylation of the cellobiose lipid. The fatty acid synthase fas2 may be involved in synthesis of the carbon backbone of the short-chain beta-hydroxy fatty acid esterified to the cellobiose disaccharide. The secreted UA consists of a mixture of both alpha-hydroxylated and non-hydroxylated glycolipids; therefore, alpha-hydroxylation of the long-chain fatty, catalyzed by the fatty acid hydroxylase ahd1, occurs late in UA biosynthesis and may be the last step before secretion. This chain is Fatty acid hydroxylase ahd1, found in Mycosarcoma maydis (Corn smut fungus).